Consider the following 60-residue polypeptide: Large ribosomal subunit protein uL30 (60 aa).

Belongs to the universal ribosomal protein uL30 family. In terms of assembly, part of the 50S ribosomal subunit.

The sequence is that of Large ribosomal subunit protein uL30 from Syntrophomonas wolfei subsp. wolfei (strain DSM 2245B / Goettingen).